A 951-amino-acid chain; its full sequence is Zinc fingers and homeoboxes protein 3 (951 aa).

The tract at residues 1–66 is disordered; sequence MASKRKSTTP…SSTDGSALAN (66 aa). A required for nuclear localization region spans residues 1 to 107; that stretch reads MASKRKSTTP…SEHTDFNKDP (107 aa). A compositionally biased stretch (low complexity) spans 42–58; the sequence is PSEAPDASSEAAPNPSS. 2 consecutive C2H2-type zinc fingers follow at residues 77 to 100 and 109 to 132; these read YCCKECEFRSQDVTHFIGHMNSEH and FVCTGCSFLAKNPEGLSLHNAKCH. A disordered region spans residues 227–252; that stretch reads TFINGAAPGSQASAKSTKPPPAANGP. Residues 238–483 form a required for homodimerization and interaction with NFYA region; that stretch reads ASAKSTKPPP…LLTACPSITS (246 aa). The segment at 299-497 is required for repressor activity; that stretch reads LSSIPTYNAA…DANIYKNKKS (199 aa). DNA-binding regions (homeobox) lie at residues 300 to 359 and 489 to 548; these read SSIP…GISW and ANIY…RNLK. The segment at 492–550 is required for nuclear localization; the sequence is YKNKKSHEQLSALKGSFCRNQFPGQSEVEHLTKVTGLSTREVRKWFSDRRYHCRNLKGS. Ser-599 bears the Phosphoserine mark. Positions 607–666 form a DNA-binding region, homeobox 3; the sequence is TPTKYKERAPEQLRVLENSFAQNPLPPEEELDRLRSETKMTRREIDGWFSERRKKVNTEE. A compositionally biased stretch (basic and acidic residues) spans 662-676; that stretch reads VNTEETKKADGHMPK. Residues 662-690 are disordered; sequence VNTEETKKADGHMPKEEEEGAEQEGRDEE. A compositionally biased stretch (acidic residues) spans 677-690; that stretch reads EEEEGAEQEGRDEE. Phosphoserine occurs at positions 703 and 718. 2 consecutive DNA-binding regions (homeobox) follow at residues 759 to 818 and 830 to 889; these read PSKV…KNGQ and FPPG…TRAV. Positions 916-951 are disordered; sequence SELSENSESWEPSAPEASSEPFDTSSPQSGRQLEAD. Over residues 919–936 the composition is skewed to low complexity; the sequence is SENSESWEPSAPEASSEP. Residues Ser-922 and Ser-941 each carry the phosphoserine modification. Residues 937–951 are compositionally biased toward polar residues; sequence FDTSSPQSGRQLEAD.

It belongs to the ZHX family. In terms of assembly, homodimer (via homeobox domain 1). Heterodimer with ZHX1 (via homeobox domain 1). Heterodimer with ZHX2 (via homeobox domain 1). Heterodimerization with ZHX1 is a prerequisite for repressor activity. Interacts with NFYA. Ubiquitously expressed.

It is found in the nucleus. Functionally, acts as a transcriptional repressor. Involved in the early stages of mesenchymal stem cell (MSC) osteogenic differentiation. Is a regulator of podocyte gene expression during primary glomerula disease. Binds to promoter DNA. The protein is Zinc fingers and homeoboxes protein 3 (Zhx3) of Mus musculus (Mouse).